The following is a 471-amino-acid chain: NADH-quinone oxidoreductase subunit N 1 (471 aa).

The next 14 membrane-spanning stretches (helical) occupy residues 11-31 (ALVP…AGAW), 39-59 (TIHV…ALAA), 81-101 (AIVL…VAGH), 105-125 (TEFV…AGAG), 127-147 (LIML…LAGW), 162-182 (LAGA…FGVA), 200-220 (AAAA…AGAV), 234-254 (PPPV…VAFY), 270-290 (LITA…AFAQ), 296-316 (MLGY…AVAG), 324-344 (ALLL…AVVA), 365-385 (ALAL…AVFV), 398-418 (GLAW…FYYL), and 444-464 (AVAL…GIVL).

The protein belongs to the complex I subunit 2 family. NDH-1 is composed of 14 different subunits. Subunits NuoA, H, J, K, L, M, N constitute the membrane sector of the complex.

The protein resides in the cell membrane. It carries out the reaction a quinone + NADH + 5 H(+)(in) = a quinol + NAD(+) + 4 H(+)(out). In terms of biological role, NDH-1 shuttles electrons from NADH, via FMN and iron-sulfur (Fe-S) centers, to quinones in the respiratory chain. The immediate electron acceptor for the enzyme in this species is believed to be a menaquinone. Couples the redox reaction to proton translocation (for every two electrons transferred, four hydrogen ions are translocated across the cytoplasmic membrane), and thus conserves the redox energy in a proton gradient. In Streptomyces griseus subsp. griseus (strain JCM 4626 / CBS 651.72 / NBRC 13350 / KCC S-0626 / ISP 5235), this protein is NADH-quinone oxidoreductase subunit N 1.